Reading from the N-terminus, the 105-residue chain is Small ribosomal subunit protein uS10c (105 aa).

It belongs to the universal ribosomal protein uS10 family. As to quaternary structure, part of the 30S ribosomal subunit.

Its subcellular location is the plastid. The protein localises to the chloroplast. In terms of biological role, involved in the binding of tRNA to the ribosomes. The polypeptide is Small ribosomal subunit protein uS10c (Porphyra purpurea (Red seaweed)).